The chain runs to 186 residues: UPF0301 protein Swit_2673 (186 aa).

Belongs to the UPF0301 (AlgH) family.

This Rhizorhabdus wittichii (strain DSM 6014 / CCUG 31198 / JCM 15750 / NBRC 105917 / EY 4224 / RW1) (Sphingomonas wittichii) protein is UPF0301 protein Swit_2673.